A 512-amino-acid chain; its full sequence is Maturase K (512 aa).

Belongs to the intron maturase 2 family. MatK subfamily.

The protein localises to the plastid. Its subcellular location is the chloroplast. Usually encoded in the trnK tRNA gene intron. Probably assists in splicing its own and other chloroplast group II introns. The sequence is that of Maturase K from Dalea wrightii (Wright's prairie clover).